The following is a 542-amino-acid chain: Major facilitator superfamily transporter mfsA (542 aa).

The next 11 membrane-spanning stretches (helical) occupy residues 19–39 (FAAVVGFSLFGYNQGMMAGLL), 70–90 (GAVTSCYELGCFFGALFSMFC), 99–119 (LIFMGASILIVGALLTTVCYT), 127–149 (FVIGRVVSGIGNGMNTATIPVWQ), 160–180 (FLVCFEGAMIAGGTFIAYWVV), 194–214 (FPVALQIFFALVVATGALMLP), 321–341 (IMGGVFASVYALATIPSFFMI), 349–369 (LYLIGFLGQGLSFVITFACLI), 380–400 (AVGIFLFITFFAFTLLPLPWI), 413–432 (VGASASTCTNWMCNFAVVMF), and 444–464 (VYLFFALFNFVGLIFGYFFYV).

This sequence belongs to the major facilitator superfamily. Sugar transporter (TC 2.A.1.1) family.

The protein localises to the membrane. In terms of biological role, major facilitator superfamily transporter that may be involved in A.fumigatus adaptation to azoles such as vorizonazole. In Aspergillus fumigatus (strain ATCC MYA-4609 / CBS 101355 / FGSC A1100 / Af293) (Neosartorya fumigata), this protein is Major facilitator superfamily transporter mfsA.